We begin with the raw amino-acid sequence, 485 residues long: T-complex protein 1 subunit theta (485 aa).

This sequence belongs to the TCP-1 chaperonin family. Component of the T-complex protein 1 (TCP1) complex.

It is found in the cytoplasm. Its function is as follows. Molecular chaperone; assists the folding of proteins upon ATP hydrolysis. This is T-complex protein 1 subunit theta (CCT8) from Encephalitozoon cuniculi (strain GB-M1) (Microsporidian parasite).